The sequence spans 326 residues: DNA-directed RNA polymerase subunit alpha (326 aa).

The segment at 1–231 (MQTNLLKPKI…DQLVVFAALE (231 aa)) is alpha N-terminal domain (alpha-NTD). The segment at 247–326 (VDPMLMRPVD…ESWPPANLEK (80 aa)) is alpha C-terminal domain (alpha-CTD).

This sequence belongs to the RNA polymerase alpha chain family. As to quaternary structure, homodimer. The RNAP catalytic core consists of 2 alpha, 1 beta, 1 beta' and 1 omega subunit. When a sigma factor is associated with the core the holoenzyme is formed, which can initiate transcription.

The enzyme catalyses RNA(n) + a ribonucleoside 5'-triphosphate = RNA(n+1) + diphosphate. In terms of biological role, DNA-dependent RNA polymerase catalyzes the transcription of DNA into RNA using the four ribonucleoside triphosphates as substrates. This is DNA-directed RNA polymerase subunit alpha from Polynucleobacter asymbioticus (strain DSM 18221 / CIP 109841 / QLW-P1DMWA-1) (Polynucleobacter necessarius subsp. asymbioticus).